Reading from the N-terminus, the 298-residue chain is Probable porphobilinogen deaminase (298 aa).

Residue C241 is modified to S-(dipyrrolylmethanemethyl)cysteine.

It belongs to the HMBS family. The cofactor is dipyrromethane.

It catalyses the reaction 4 porphobilinogen + H2O = hydroxymethylbilane + 4 NH4(+). It functions in the pathway porphyrin-containing compound metabolism; protoporphyrin-IX biosynthesis; coproporphyrinogen-III from 5-aminolevulinate: step 2/4. In terms of biological role, tetrapolymerization of the monopyrrole PBG into the hydroxymethylbilane pre-uroporphyrinogen in several discrete steps. This Methanopyrus kandleri (strain AV19 / DSM 6324 / JCM 9639 / NBRC 100938) protein is Probable porphobilinogen deaminase.